A 458-amino-acid chain; its full sequence is Phosphoglucosamine mutase (458 aa).

The active-site Phosphoserine intermediate is Ser-106. Ser-106, Asp-247, Asp-249, and Asp-251 together coordinate Mg(2+). Residue Ser-106 is modified to Phosphoserine.

The protein belongs to the phosphohexose mutase family. It depends on Mg(2+) as a cofactor. Post-translationally, activated by phosphorylation.

The enzyme catalyses alpha-D-glucosamine 1-phosphate = D-glucosamine 6-phosphate. In terms of biological role, catalyzes the conversion of glucosamine-6-phosphate to glucosamine-1-phosphate. This is Phosphoglucosamine mutase from Chlamydia pneumoniae (Chlamydophila pneumoniae).